We begin with the raw amino-acid sequence, 335 residues long: 5-formaminoimidazole-4-carboxamide-1-(beta)-D-ribofuranosyl 5'-monophosphate synthetase (335 aa).

5-amino-1-(5-phospho-beta-D-ribosyl)imidazole-4-carboxamide-binding residues include His-21 and Ser-86. Residues 107–315 (RELLRWEADQ…YFDKPMDMGE (209 aa)) enclose the ATP-grasp domain. ATP-binding positions include 137-189 (PTEV…VPAY) and Glu-211. Asn-231 contacts 5-amino-1-(5-phospho-beta-D-ribosyl)imidazole-4-carboxamide. Mg(2+)-binding residues include Glu-270 and Glu-283.

It belongs to the phosphohexose mutase family. Mg(2+) is required as a cofactor. Requires Mn(2+) as cofactor.

The catalysed reaction is 5-amino-1-(5-phospho-beta-D-ribosyl)imidazole-4-carboxamide + formate + ATP = 5-formamido-1-(5-phospho-D-ribosyl)imidazole-4-carboxamide + ADP + phosphate. It participates in purine metabolism; IMP biosynthesis via de novo pathway; 5-formamido-1-(5-phospho-D-ribosyl)imidazole-4-carboxamide from 5-amino-1-(5-phospho-D-ribosyl)imidazole-4-carboxamide (formate route): step 1/1. Catalyzes the ATP- and formate-dependent formylation of 5-aminoimidazole-4-carboxamide-1-beta-d-ribofuranosyl 5'-monophosphate (AICAR) to 5-formaminoimidazole-4-carboxamide-1-beta-d-ribofuranosyl 5'-monophosphate (FAICAR) in the absence of folates. This is 5-formaminoimidazole-4-carboxamide-1-(beta)-D-ribofuranosyl 5'-monophosphate synthetase from Pyrobaculum arsenaticum (strain DSM 13514 / JCM 11321 / PZ6).